We begin with the raw amino-acid sequence, 868 residues long: Alanine--tRNA ligase (868 aa).

Residues H555, H559, C657, and H661 each coordinate Zn(2+). The segment at 828 to 847 (SQVGGKGGGRPDMAQAGGSE) is disordered.

This sequence belongs to the class-II aminoacyl-tRNA synthetase family. The cofactor is Zn(2+).

It is found in the cytoplasm. It carries out the reaction tRNA(Ala) + L-alanine + ATP = L-alanyl-tRNA(Ala) + AMP + diphosphate. Functionally, catalyzes the attachment of alanine to tRNA(Ala) in a two-step reaction: alanine is first activated by ATP to form Ala-AMP and then transferred to the acceptor end of tRNA(Ala). Also edits incorrectly charged Ser-tRNA(Ala) and Gly-tRNA(Ala) via its editing domain. In Pseudoalteromonas translucida (strain TAC 125), this protein is Alanine--tRNA ligase.